Here is a 328-residue protein sequence, read N- to C-terminus: DNA-directed RNA polymerase subunit alpha (328 aa).

The segment at 1 to 231 (MIYQMQMPAK…EHVAFFADFS (231 aa)) is alpha N-terminal domain (alpha-NTD). The segment at 252-328 (MRKLLNTKIE…MDITKYQMKG (77 aa)) is alpha C-terminal domain (alpha-CTD).

It belongs to the RNA polymerase alpha chain family. Homodimer. The RNAP catalytic core consists of 2 alpha, 1 beta, 1 beta' and 1 omega subunit. When a sigma factor is associated with the core the holoenzyme is formed, which can initiate transcription.

It carries out the reaction RNA(n) + a ribonucleoside 5'-triphosphate = RNA(n+1) + diphosphate. Its function is as follows. DNA-dependent RNA polymerase catalyzes the transcription of DNA into RNA using the four ribonucleoside triphosphates as substrates. This Chlorobium phaeovibrioides (strain DSM 265 / 1930) (Prosthecochloris vibrioformis (strain DSM 265)) protein is DNA-directed RNA polymerase subunit alpha.